A 538-amino-acid chain; its full sequence is Probable ribonuclease 3 (538 aa).

2 RNase III domains span residues Ile24 to Gly149 and Ala238 to Leu381. The DRBM domain occupies Leu408–Tyr477.

It belongs to the ribonuclease III family.

The enzyme catalyses Endonucleolytic cleavage to 5'-phosphomonoester.. Its function is as follows. Digests double-stranded RNA. This chain is Probable ribonuclease 3, found in Acanthamoeba polyphaga (Amoeba).